The chain runs to 268 residues: Norsolorinic acid ketoreductase nor1 (268 aa).

Residues isoleucine 32, aspartate 79, asparagine 108, tyrosine 182, lysine 186, valine 213, and threonine 215 each coordinate NADP(+). Catalysis depends on tyrosine 182, which acts as the Proton donor. Lysine 186 serves as the catalytic Lowers pKa of active site Tyr.

This sequence belongs to the short-chain dehydrogenases/reductases (SDR) family.

The protein localises to the cytoplasm. It is found in the cytosol. The protein resides in the vacuole. The catalysed reaction is (1'S)-averantin + NADP(+) = norsolorinic acid + NADPH + H(+). It functions in the pathway mycotoxin biosynthesis. In terms of biological role, norsolorinic acid ketoreductase; part of the fragmented gene cluster that mediates the biosynthesis of dothistromin (DOTH), a polyketide toxin very similar in structure to the aflatoxin precursor, versicolorin B. The first step of the pathway is the conversion of acetate to norsolorinic acid (NOR) and requires the fatty acid synthase subunits hexA and hexB, as well as the polyketide synthase pksA. PksA combines a hexanoyl starter unit and 7 malonyl-CoA extender units to synthesize the precursor NOR. The hexanoyl starter unit is provided to the acyl-carrier protein (ACP) domain by the fungal fatty acid synthase hexA/hexB. The second step is the conversion of NOR to averantin (AVN) and requires the norsolorinic acid ketoreductase nor1, which catalyzes the dehydration of norsolorinic acid to form (1'S)-averantin. The cytochrome P450 monooxygenase avnA then catalyzes the hydroxylation of AVN to 5'hydroxyaverantin (HAVN). The next step is performed by adhA that transforms HAVN to averufin (AVF). Averufin might then be converted to hydroxyversicolorone by cypX and avfA. Hydroxyversicolorone is further converted versiconal hemiacetal acetate (VHA) by moxY. VHA is then the substrate for the versiconal hemiacetal acetate esterase est1 to yield versiconal (VAL). Versicolorin B synthase vbsA then converts VAL to versicolorin B (VERB) by closing the bisfuran ring. Then, the activity of the versicolorin B desaturase verB leads to versicolorin A (VERA). DotB, a predicted chloroperoxidase, may perform epoxidation of the A-ring of VERA. Alternatively, a cytochrome P450, such as cypX or avnA could catalyze this step. It is also possible that another, uncharacterized, cytochrome P450 enzyme is responsible for this step. Opening of the epoxide could potentially be achieved by the epoxide hydrolase epoA. However, epoA seems not to be required for DOTH biosynthesis, but other epoxide hydrolases may have the ability to complement this hydrolysis. Alternatively, opening of the epoxide ring could be achieved non-enzymatically. The next step is the deoxygenation of ring A to yield the 5,8-dihydroxyanthraquinone which is most likely catalyzed by the NADPH dehydrogenase encoded by ver1. The last stages of DOTH biosynthesis are proposed to involve hydroxylation of the bisfuran. OrdB and norB might have oxidative roles here. An alternative possibility is that cytochrome P450 monoogenases such as avnA and cypX might perform these steps in addition to previously proposed steps. The chain is Norsolorinic acid ketoreductase nor1 from Dothistroma septosporum (strain NZE10 / CBS 128990) (Red band needle blight fungus).